The sequence spans 765 residues: MNFEDIEDQDGIRLSWNTFSATPAENARAVIPIAAMYTPLHENERMTIEQYDPVACRAPCRAVLNPYCHVDLRARFWICPFCFQRNPLPAQYSDISSNSLPLELLSQSTTMEYVLSKPVKSPPVFLFVMDTAVDESELTALKDAVIVSLSLLPPDAIVGLITYGSLIQVHEIGFEAMPKSYVFQPAADYSTMKLQQLLALSGNQIRSSSSKAKISGTGITLNLGAASRFLMPVQKCEMHLLNILEQLQPDCLEVPAGQRQLRCTGAAVKIASDLLGIAFPKCGSRIELFCGGPCTVGLGQVVSTELKEPMRSHSEIANDKAKHFKKSKKFYSSLAERLSNQGHALDLFAGCLDQVGIMEMENLVNNTGGAIVLSDSFTTSIFKQSFQRLFSVDASGYLKMGFMANLEVLTSKGLTICGMIGNGVGENKKGTNISDTQIGISKTNSWKMAAISPKSSYALYFDLGKEMGNPNSQRPTQAFIQFLTYYQHSSGTYRLRVTTISRSFITGNAKSISESFDQEAAAAIVARMALFKCQTEDEMSVTRWIDRNLIRLCQHFADYRKEDPSSFRLLPNFTLYPQFIFHLRRSPFLHIFNNSPDETSFYRHMLNVADVNDSLIMIQPTLQSYSFNEPEGVPVLLDSVSIKPDVILLLDTYFHILIFHGSTIAQWRNAGYQEQPEYVNLKELLLAPRLEVTELLADRFPIPRFIVCDQGGSQARFLLSRINPSVSFNKSSQFSPMSKDSETVLTDDVNLQKFMDHLRKMAVIS.

Residues C56, C60, C79, and C82 each coordinate Zn(2+). A phosphoserine mark is found at S565 and S566.

Belongs to the SEC23/SEC24 family. SEC23 subfamily. The COPII coat is composed of at least 5 proteins: the sec23/24 complex, the sec13/31 complex, and the protein sar1.

The protein localises to the cytoplasm. It localises to the cytoplasmic vesicle. The protein resides in the COPII-coated vesicle membrane. It is found in the endoplasmic reticulum membrane. Its subcellular location is the golgi apparatus membrane. Its function is as follows. Component of the coat protein complex II (COPII) which promotes the formation of transport vesicles from the endoplasmic reticulum (ER). The coat has two main functions, the physical deformation of the endoplasmic reticulum membrane into vesicles and the selection of cargo molecules. This is Protein transport protein sec23-2 (sec232) from Schizosaccharomyces pombe (strain 972 / ATCC 24843) (Fission yeast).